A 209-amino-acid chain; its full sequence is Pyridoxine/pyridoxamine 5'-phosphate oxidase (209 aa).

Residues 7–10 (REDY) and K64 each bind substrate. FMN contacts are provided by residues 59–64 (RIVLLK), 74–75 (FT), R80, and K81. Y121, R125, and S129 together coordinate substrate. Residues 138 to 139 (QS) and W182 contribute to the FMN site. Substrate is bound at residue 188–190 (RLH). R192 serves as a coordination point for FMN.

The protein belongs to the pyridoxamine 5'-phosphate oxidase family. Homodimer. The cofactor is FMN.

The enzyme catalyses pyridoxamine 5'-phosphate + O2 + H2O = pyridoxal 5'-phosphate + H2O2 + NH4(+). The catalysed reaction is pyridoxine 5'-phosphate + O2 = pyridoxal 5'-phosphate + H2O2. It participates in cofactor metabolism; pyridoxal 5'-phosphate salvage; pyridoxal 5'-phosphate from pyridoxamine 5'-phosphate: step 1/1. It functions in the pathway cofactor metabolism; pyridoxal 5'-phosphate salvage; pyridoxal 5'-phosphate from pyridoxine 5'-phosphate: step 1/1. Functionally, catalyzes the oxidation of either pyridoxine 5'-phosphate (PNP) or pyridoxamine 5'-phosphate (PMP) into pyridoxal 5'-phosphate (PLP). The polypeptide is Pyridoxine/pyridoxamine 5'-phosphate oxidase (Actinobacillus pleuropneumoniae serotype 5b (strain L20)).